The sequence spans 130 residues: Large ribosomal subunit protein bL20 (130 aa).

The protein belongs to the bacterial ribosomal protein bL20 family.

In terms of biological role, binds directly to 23S ribosomal RNA and is necessary for the in vitro assembly process of the 50S ribosomal subunit. It is not involved in the protein synthesizing functions of that subunit. The sequence is that of Large ribosomal subunit protein bL20 from Salinispora arenicola (strain CNS-205).